Consider the following 221-residue polypeptide: Ras-related protein Rab-28 (221 aa).

Ser-2 is subject to N-acetylserine. Ser-8 carries the phosphoserine modification. Gly-21, Gly-24, Lys-25, Thr-26, Ser-27, Gly-38, Lys-39, Tyr-41, and Thr-44 together coordinate GTP. Residue Thr-26 participates in Mg(2+) binding. The interval 35 to 49 (ETFGKRYKQTIGLDF) is switch I. Positions 44 and 68 each coordinate Mg(2+). The segment at 68 to 85 (DIGGQTIGGKMLDKYIYG) is switch II. GTP is bound by residues Gly-71, Asn-129, Lys-130, Asp-132, Ala-160, and Lys-161. Cys-218 bears the Cysteine methyl ester mark. Cys-218 carries the S-farnesyl cysteine lipid modification. Positions 219–221 (AVQ) are cleaved as a propeptide — removed in mature form.

This sequence belongs to the small GTPase superfamily. Rab family. In terms of assembly, interacts (prenylated form) with PDE6D; the interaction promotes RAB28 delivery to the photoreceptor outer segments. Interacts with KCNJ13; the interaction may facilitate cone outer segments phagocytosis. Also participates in nuclear factor kappa-B p65/RELA nuclear transport in endothelial cells. Mg(2+) serves as cofactor. In terms of processing, isoprenylated.

The protein localises to the cell membrane. The protein resides in the cytoplasm. It is found in the cytoskeleton. It localises to the cilium basal body. Its subcellular location is the nucleus. The enzyme catalyses GTP + H2O = GDP + phosphate + H(+). With respect to regulation, regulated by guanine nucleotide exchange factors (GEFs) which promote the exchange of bound GDP for free GTP. Regulated by GTPase activating proteins (GAPs) which increase the GTP hydrolysis activity. Inhibited by GDP dissociation inhibitors (GDIs). In terms of biological role, the small GTPases Rab are key regulators of intracellular membrane trafficking, from the formation of transport vesicles to their fusion with membranes. Rabs cycle between an inactive GDP-bound form and an active GTP-bound form that is able to recruit to membranes different sets of downstream effectors directly responsible for vesicle formation, movement, tethering and fusion. RAB28 is required for shedding and phagocytosis of cone cell outer segments (OS) discs in the retina. Also participates in nuclear factor kappa-B p65/RELA nuclear transport in endothelial cells. The sequence is that of Ras-related protein Rab-28 (RAB28) from Pongo abelii (Sumatran orangutan).